We begin with the raw amino-acid sequence, 212 residues long: Ribosomal RNA small subunit methyltransferase G (212 aa).

S-adenosyl-L-methionine-binding positions include G80, L85, 131–132 (AE), and R146.

It belongs to the methyltransferase superfamily. RNA methyltransferase RsmG family.

It is found in the cytoplasm. It catalyses the reaction guanosine(527) in 16S rRNA + S-adenosyl-L-methionine = N(7)-methylguanosine(527) in 16S rRNA + S-adenosyl-L-homocysteine. Functionally, specifically methylates the N7 position of guanine in position 527 of 16S rRNA. This Xanthomonas oryzae pv. oryzae (strain KACC10331 / KXO85) protein is Ribosomal RNA small subunit methyltransferase G.